The primary structure comprises 122 residues: Large ribosomal subunit protein uL14 (122 aa).

Belongs to the universal ribosomal protein uL14 family. Part of the 50S ribosomal subunit. Forms a cluster with proteins L3 and L19. In the 70S ribosome, L14 and L19 interact and together make contacts with the 16S rRNA in bridges B5 and B8.

Its function is as follows. Binds to 23S rRNA. Forms part of two intersubunit bridges in the 70S ribosome. This chain is Large ribosomal subunit protein uL14, found in Mycoplasma mobile (strain ATCC 43663 / 163K / NCTC 11711) (Mesomycoplasma mobile).